The chain runs to 91 residues: C-C motif chemokine 5 (91 aa).

The signal sequence occupies residues 1–23 (MKISAAALTIILTAAALCTPAPA). Disulfide bonds link C33-C57 and C34-C73.

This sequence belongs to the intercrine beta (chemokine CC) family. As to expression, T-cell and macrophage specific.

The protein resides in the secreted. Its function is as follows. Chemoattractant for blood monocytes, memory T-helper cells and eosinophils. Causes the release of histamine from basophils and activates eosinophils. May activate several chemokine receptors including CCR1, CCR3, CCR4 and CCR5. May also be an agonist of the G protein-coupled receptor GPR75. Together with GPR75, may play a role in neuron survival through activation of a downstream signaling pathway involving the PI3, Akt and MAP kinases. By activating GPR75 may also play a role in insulin secretion by islet cells. The sequence is that of C-C motif chemokine 5 (Ccl5) from Mus musculus (Mouse).